Consider the following 1007-residue polypeptide: Ephrin type-A receptor 10 (1007 aa).

The first 22 residues, 1–22 (METGAGPHPLRLFVCLIPLCLA), serve as a signal peptide directing secretion. The Extracellular segment spans residues 23–565 (LLLGPGRPGT…APGSRDQSPA (543 aa)). The 182-residue stretch at 35 to 216 (EVILLDSKAS…YYKQCRATVR (182 aa)) folds into the Eph LBD domain. Residue Asn311 is glycosylated (N-linked (GlcNAc...) asparagine). Disordered regions lie at residues 323–343 (ARSP…APRD) and 467–486 (PQSV…PGTN). Fibronectin type-III domains follow at residues 340–452 (APRD…TGPG) and 456–554 (EEDE…TPGE). N-linked (GlcNAc...) asparagine glycosylation occurs at Asn486. The chain crosses the membrane as a helical span at residues 566 to 586 (VVVTVVTISALLVLGSVMSVL). Over 587 to 1007 (AIWRRPCDGK…LQLQGQGVQV (421 aa)) the chain is Cytoplasmic. A Protein kinase domain is found at 644 to 899 (VTLEKSLGAG…PRFSQIHSIL (256 aa)). Residues 932–996 (PSFGSVGAWL…LSGISALQTR (65 aa)) form the SAM domain.

It belongs to the protein kinase superfamily. Tyr protein kinase family. Ephrin receptor subfamily. In terms of tissue distribution, expressed in the cochlea, in the organ of Corti, spiral ganglion, and stria vascularis.

The protein resides in the cell membrane. The enzyme catalyses L-tyrosyl-[protein] + ATP = O-phospho-L-tyrosyl-[protein] + ADP + H(+). Its function is as follows. Receptor for members of the ephrin-A family. Binds to EFNA3, EFNA4 and EFNA5. This Mus musculus (Mouse) protein is Ephrin type-A receptor 10 (Epha10).